The primary structure comprises 374 residues: Carbamoyl phosphate synthase small chain (374 aa).

The tract at residues Met1 to Asp185 is CPSase. Residues Ser45, Gly237, and Gly239 each contribute to the L-glutamine site. Positions Arg189 to Lys374 constitute a Glutamine amidotransferase type-1 domain. The Nucleophile role is filled by Cys264. L-glutamine is bound by residues Leu265, Gln268, Asn306, Gly308, and Phe309. Active-site residues include His347 and Glu349.

It belongs to the CarA family. As to quaternary structure, composed of two chains; the small (or glutamine) chain promotes the hydrolysis of glutamine to ammonia, which is used by the large (or ammonia) chain to synthesize carbamoyl phosphate. Tetramer of heterodimers (alpha,beta)4.

It catalyses the reaction hydrogencarbonate + L-glutamine + 2 ATP + H2O = carbamoyl phosphate + L-glutamate + 2 ADP + phosphate + 2 H(+). The enzyme catalyses L-glutamine + H2O = L-glutamate + NH4(+). The protein operates within amino-acid biosynthesis; L-arginine biosynthesis; carbamoyl phosphate from bicarbonate: step 1/1. It participates in pyrimidine metabolism; UMP biosynthesis via de novo pathway; (S)-dihydroorotate from bicarbonate: step 1/3. In terms of biological role, small subunit of the glutamine-dependent carbamoyl phosphate synthetase (CPSase). CPSase catalyzes the formation of carbamoyl phosphate from the ammonia moiety of glutamine, carbonate, and phosphate donated by ATP, constituting the first step of 2 biosynthetic pathways, one leading to arginine and/or urea and the other to pyrimidine nucleotides. The small subunit (glutamine amidotransferase) binds and cleaves glutamine to supply the large subunit with the substrate ammonia. This chain is Carbamoyl phosphate synthase small chain, found in Maridesulfovibrio salexigens (strain ATCC 14822 / DSM 2638 / NCIMB 8403 / VKM B-1763) (Desulfovibrio salexigens).